Consider the following 325-residue polypeptide: NADH-quinone oxidoreductase subunit H (325 aa).

8 helical membrane passes run 11-31 (ILLT…CGAF), 81-101 (FIFT…FAIV), 114-134 (IGIL…LFAG), 154-174 (VSYE…AGSF), 186-206 (MWNI…GVAV), 237-257 (FFVG…TLFF), 265-285 (LPSF…FILI), and 304-324 (ICLP…LYNA).

Belongs to the complex I subunit 1 family. NDH-1 is composed of 13 different subunits. Subunits NuoA, H, J, K, L, M, N constitute the membrane sector of the complex.

It localises to the cell inner membrane. It catalyses the reaction a quinone + NADH + 5 H(+)(in) = a quinol + NAD(+) + 4 H(+)(out). Its function is as follows. NDH-1 shuttles electrons from NADH, via FMN and iron-sulfur (Fe-S) centers, to quinones in the respiratory chain. The immediate electron acceptor for the enzyme in this species is believed to be ubiquinone. Couples the redox reaction to proton translocation (for every two electrons transferred, four hydrogen ions are translocated across the cytoplasmic membrane), and thus conserves the redox energy in a proton gradient. This subunit may bind ubiquinone. The chain is NADH-quinone oxidoreductase subunit H from Proteus mirabilis (strain HI4320).